We begin with the raw amino-acid sequence, 442 residues long: Vitellogenin-2 (442 aa).

Residues methionine 1–glycine 19 form the signal peptide. Residues proline 21–serine 33 are compositionally biased toward low complexity. Positions proline 21–valine 44 are disordered. Residues serine 31 and serine 33 each carry the phosphoserine modification. The segment covering leucine 34–valine 44 has biased composition (polar residues). Serine 82 is subject to Phosphoserine. Disordered regions lie at residues glutamine 165 to threonine 200 and lysine 408 to glutamine 442. Phosphothreonine is present on threonine 170. Position 172 is a sulfotyrosine (tyrosine 172). 5 positions are modified to phosphoserine: serine 173, serine 178, serine 181, serine 182, and serine 183. Composition is skewed to low complexity over residues glutamate 175–glutamine 186 and arginine 431–glutamine 442.

It belongs to the AB hydrolase superfamily. Lipase family. Post-translationally, tyrosine sulfation occurs in the female only and plays an essential functional role. In terms of tissue distribution, synthesized in the fat body and ovarian follicle cells and accumulate in the oocyte.

Its subcellular location is the secreted. Functionally, vitellogenin is the major yolk protein of eggs where it is used as a food source during embryogenesis. Vitellogenins and their receptor yl/yolkless are required for maintenance of microtubule plus-end orientation towards the posterior pole of oocytes. Involved in polarized localization of germ plasm components, such as osk mRNA and vas protein, to the oocyte posterior cortex. Receptor-mediated endocytosis by yl/yolkless is crucial for actin reorganization, mediated by osk isoform A/Long, required to anchor germ plasm components to the oocyte cortex. In Drosophila melanogaster (Fruit fly), this protein is Vitellogenin-2 (Yp2).